The primary structure comprises 228 residues: Triosephosphate isomerase (228 aa).

Substrate is bound at residue N9–K11. H93 functions as the Electrophile in the catalytic mechanism. E141 acts as the Proton acceptor in catalysis. Substrate is bound by residues I146, G181, and A202–S203.

The protein belongs to the triosephosphate isomerase family. Homotetramer; dimer of dimers.

The protein localises to the cytoplasm. It carries out the reaction D-glyceraldehyde 3-phosphate = dihydroxyacetone phosphate. It participates in carbohydrate biosynthesis; gluconeogenesis. Its pathway is carbohydrate degradation; glycolysis; D-glyceraldehyde 3-phosphate from glycerone phosphate: step 1/1. Involved in the gluconeogenesis. Catalyzes stereospecifically the conversion of dihydroxyacetone phosphate (DHAP) to D-glyceraldehyde-3-phosphate (G3P). The chain is Triosephosphate isomerase from Pyrobaculum calidifontis (strain DSM 21063 / JCM 11548 / VA1).